The following is a 532-amino-acid chain: Pentatricopeptide repeat-containing protein At4g02820, mitochondrial (532 aa).

Residues methionine 1–threonine 28 constitute a mitochondrion transit peptide. The segment at proline 35–valine 56 is disordered. PPR repeat units lie at residues glycine 161 to lysine 195, serine 196 to arginine 226, aspartate 230 to proline 264, aspartate 265 to leucine 295, asparagine 300 to serine 330, asparagine 335 to valine 365, aspartate 370 to proline 404, serine 405 to serine 435, asparagine 442 to alanine 472, and asparagine 476 to threonine 512.

It belongs to the PPR family. P subfamily.

It is found in the mitochondrion. This Arabidopsis thaliana (Mouse-ear cress) protein is Pentatricopeptide repeat-containing protein At4g02820, mitochondrial.